The sequence spans 74 residues: Putative Fe(2+) transport protein A (74 aa).

Belongs to the FeoA family.

Functionally, might be involved in Fe(2+) ion uptake. This is Putative Fe(2+) transport protein A from Campylobacter jejuni subsp. jejuni serotype O:2 (strain ATCC 700819 / NCTC 11168).